The following is a 317-amino-acid chain: DNA-directed RNA polymerase subunit alpha (317 aa).

An alpha N-terminal domain (alpha-NTD) region spans residues 1–234 (MKQFNKPEFG…SHFDVFTTLA (234 aa)). The tract at residues 249–317 (EEKELDKPVE…AALELTFKQN (69 aa)) is alpha C-terminal domain (alpha-CTD).

This sequence belongs to the RNA polymerase alpha chain family. In terms of assembly, homodimer. The RNAP catalytic core consists of 2 alpha, 1 beta, 1 beta' and 1 omega subunit. When a sigma factor is associated with the core the holoenzyme is formed, which can initiate transcription.

The catalysed reaction is RNA(n) + a ribonucleoside 5'-triphosphate = RNA(n+1) + diphosphate. DNA-dependent RNA polymerase catalyzes the transcription of DNA into RNA using the four ribonucleoside triphosphates as substrates. The chain is DNA-directed RNA polymerase subunit alpha from Mesoplasma florum (strain ATCC 33453 / NBRC 100688 / NCTC 11704 / L1) (Acholeplasma florum).